The chain runs to 203 residues: Small ribosomal subunit protein uS4 (203 aa).

Residues arginine 93–alanine 155 enclose the S4 RNA-binding domain.

Belongs to the universal ribosomal protein uS4 family. In terms of assembly, part of the 30S ribosomal subunit. Contacts protein S5. The interaction surface between S4 and S5 is involved in control of translational fidelity.

One of the primary rRNA binding proteins, it binds directly to 16S rRNA where it nucleates assembly of the body of the 30S subunit. Its function is as follows. With S5 and S12 plays an important role in translational accuracy. The sequence is that of Small ribosomal subunit protein uS4 from Lactobacillus acidophilus (strain ATCC 700396 / NCK56 / N2 / NCFM).